Reading from the N-terminus, the 232-residue chain is A-type ATP synthase subunit D (232 aa).

Positions 200 to 232 (KKIKNKKEAEEEDEDEDESEMTDETVVQTPADD) are disordered. Residues 209 to 222 (EEEDEDEDESEMTD) show a composition bias toward acidic residues.

This sequence belongs to the V-ATPase D subunit family. In terms of assembly, has multiple subunits with at least A(3), B(3), C, D, E, F, H, I and proteolipid K(x).

Its subcellular location is the cell membrane. Component of the A-type ATP synthase that produces ATP from ADP in the presence of a proton gradient across the membrane. The protein is A-type ATP synthase subunit D of Haloquadratum walsbyi (strain DSM 16790 / HBSQ001).